Consider the following 421-residue polypeptide: Glycosaminoglycan xylosylkinase homolog (421 aa).

Positions 1-21 are cleaved as a signal peptide; it reads MNKRSVIIAGIVASLLGLALG. An N-linked (GlcNAc...) asparagine glycan is attached at asparagine 83. Positions 131 and 147 each coordinate ATP. Aspartate 166 is a binding site for Mn(2+). 2 disulfides stabilise this stretch: cysteine 225/cysteine 240 and cysteine 230/cysteine 233. 252–255 lines the ATP pocket; that stretch reads IYIV. Cystine bridges form between cysteine 285–cysteine 351 and cysteine 352–cysteine 409. The active site involves aspartate 314. ATP is bound by residues glutamate 319 and aspartate 329. Aspartate 329 lines the Mn(2+) pocket.

It belongs to the FAM20 family. Mn(2+) serves as cofactor.

Its subcellular location is the golgi apparatus. It localises to the endoplasmic reticulum. The enzyme catalyses 3-O-(beta-D-galactosyl-(1-&gt;3)-beta-D-galactosyl-(1-&gt;4)-beta-D-xylosyl)-L-seryl-[protein] + ATP = 3-O-(beta-D-galactosyl-(1-&gt;3)-beta-D-galactosyl-(1-&gt;4)-beta-D-2-O-phosphoxylosyl)-L-seryl-[protein] + ADP + H(+). Kylose kinase that mediates the 2-O-phosphorylation of xylose in the glycosaminoglycan-protein linkage region of proteoglycans. In Drosophila melanogaster (Fruit fly), this protein is Glycosaminoglycan xylosylkinase homolog.